A 159-amino-acid polypeptide reads, in one-letter code: Style cell-cycle inhibitor 1 (159 aa).

The disordered stretch occupies residues 1-86; that stretch reads MVSERSSKEK…SDHKLKEGIP (86 aa). A compositionally biased stretch (basic and acidic residues) spans 15-50; sequence ARSEDSSSSDYEEKVKRHRGTEKDDERRSRRSDKKD. Basic residues predominate over residues 51-63; sequence KKSHKHHKSSTSK. Over residues 64–85 the composition is skewed to basic and acidic residues; the sequence is KSKDDKPKKKHTESDHKLKEGI.

It localises to the nucleus. In terms of biological role, component of the auxin signaling transduction pathway that regulates cell proliferation and differentiation during flowers stigmas and styles development. Involved in the regulation of auxin-related genes. The protein is Style cell-cycle inhibitor 1 of Arabidopsis thaliana (Mouse-ear cress).